A 601-amino-acid polypeptide reads, in one-letter code: MSLQEILNPSIKTAIHQLFDLTIEKIEFQSTRKEFDGDITMVIFPLLKLIKTPQATPNGAKLNPADLGNKIGNYLVENVAQVEAFNVVSGFLNIVIANDYYINFFNTIKTDAQFGFVSPSEHDKAIMVEYSSPNTNKPLHLGHVRNNLLGYSVAEIIKASGKKVYKTQIINDRGIHICKSMLAWQKFGHSETPETSGLKGDKLVGKYYVAFDKAYKVEIAELMLQGKTEEEAKKQAPIIIEAQQMLLDWEAGKPAVMALWKTMNQWVYDGFATTYKNLGVNFDSYYYESNTYLLGKEVVQIGLDKGVFEKDPDGSVWIDLTQDGLDRKIVLRSDGTAVYMTQDIGTAIQRVKDFSDVGGMVYTVGNEQDYHFRVLFLILKKLGFDWASSLYHLSYGMVELPSGKMKSREGTVVDADDLMEEMTSTAQKLSEDLGKLESYSEEEKAILYKTIGLGALKYYILKVDPKKSMMFNPEESVDFAGNTGPFIQYTYARIQSILRKANFDITVTISTKLHPKEKELIKQIEMYPEVIQHAAANHSPALIANYIYDLVKEYNSFYQTVSILGEEDNDKKVFRVQLSKKVADTIKTAFTLLGIDVPERM.

A 'HIGH' region motif is present at residues Pro133–His143.

The protein belongs to the class-I aminoacyl-tRNA synthetase family. In terms of assembly, monomer.

It localises to the cytoplasm. The catalysed reaction is tRNA(Arg) + L-arginine + ATP = L-arginyl-tRNA(Arg) + AMP + diphosphate. The polypeptide is Arginine--tRNA ligase (Flavobacterium psychrophilum (strain ATCC 49511 / DSM 21280 / CIP 103535 / JIP02/86)).